The primary structure comprises 475 residues: Argininosuccinate lyase (475 aa).

This sequence belongs to the lyase 1 family. Argininosuccinate lyase subfamily.

The protein localises to the cytoplasm. The enzyme catalyses 2-(N(omega)-L-arginino)succinate = fumarate + L-arginine. It participates in amino-acid biosynthesis; L-arginine biosynthesis; L-arginine from L-ornithine and carbamoyl phosphate: step 3/3. This Streptomyces griseus subsp. griseus (strain JCM 4626 / CBS 651.72 / NBRC 13350 / KCC S-0626 / ISP 5235) protein is Argininosuccinate lyase.